The chain runs to 631 residues: ATP-dependent DNA helicase 2 subunit 1 (631 aa).

The region spanning 262-487 (FYLGPNLSMS…VEFFQKIIKK (226 aa)) is the Ku domain. Residues 550-570 (AEPHKKRAAKSTTAGASGPKM) are disordered.

Belongs to the ku70 family. Heterodimer of a 70 kDa and a 80 kDa subunit.

The protein resides in the nucleus. It localises to the chromosome. The enzyme catalyses ATP + H2O = ADP + phosphate + H(+). In terms of biological role, single-stranded DNA-dependent ATP-dependent helicase. Involved in non-homologous end joining (NHEJ) DNA double strand break repair. Sequence-specific DNA-binding protein that has a high affinity for a 31 bp sequence in the Yp1 gene. Site-specific DNA binding to 31 bp P element inverted repeats. The polypeptide is ATP-dependent DNA helicase 2 subunit 1 (Irbp) (Drosophila melanogaster (Fruit fly)).